Here is a 380-residue protein sequence, read N- to C-terminus: Cytochrome b (380 aa).

Transmembrane regions (helical) follow at residues 33 to 53 (FGSLLGLCLMIQILTGLFLAM), 77 to 98 (WLIRYMHANGASMFFICLFLHV), 113 to 133 (WNMGIVLLFAVMATAFMGYVL), and 178 to 198 (FFAFHFILPFIITALVLVHLL). The heme b site is built by histidine 83 and histidine 97. Residues histidine 182 and histidine 196 each contribute to the heme b site. Histidine 201 is an a ubiquinone binding site. A run of 4 helical transmembrane segments spans residues 226-246 (IKDLLGALLLLTALMILVLFF), 288-308 (LGGVLALILSILILAFMPLLH), 320-340 (ITQTMYWILVSDLLILTWIGG), and 347-367 (FIMIGQVASITYFAIIVIFMP).

Belongs to the cytochrome b family. As to quaternary structure, the cytochrome bc1 complex contains 11 subunits: 3 respiratory subunits (MT-CYB, CYC1 and UQCRFS1), 2 core proteins (UQCRC1 and UQCRC2) and 6 low-molecular weight proteins (UQCRH/QCR6, UQCRB/QCR7, UQCRQ/QCR8, UQCR10/QCR9, UQCR11/QCR10 and a cleavage product of UQCRFS1). This cytochrome bc1 complex then forms a dimer. Requires heme b as cofactor.

Its subcellular location is the mitochondrion inner membrane. Functionally, component of the ubiquinol-cytochrome c reductase complex (complex III or cytochrome b-c1 complex) that is part of the mitochondrial respiratory chain. The b-c1 complex mediates electron transfer from ubiquinol to cytochrome c. Contributes to the generation of a proton gradient across the mitochondrial membrane that is then used for ATP synthesis. The protein is Cytochrome b (MT-CYB) of Synaptomys borealis (Northern bog lemming).